Here is a 292-residue protein sequence, read N- to C-terminus: Ferric aerobactin-binding protein VatD (292 aa).

An N-terminal signal peptide occupies residues 1 to 12 (MLSAALAFNSYA). In terms of domain architecture, Fe/B12 periplasmic-binding spans 30-292 (KVVALDWVLT…HITGRLTQPQ (263 aa)). Residues Trp61, Arg77, Tyr118, Arg185, Trp213, Phe215, Trp269, and Phe271 each coordinate desferrioxamine B.

The protein belongs to the bacterial solute-binding protein 8 family. As to quaternary structure, the complex is composed of two ATP-binding proteins (VatC), two transmembrane proteins (VatB) and a solute-binding protein (VatD).

Its subcellular location is the periplasm. In terms of biological role, part of the ABC transporter complex VatCDB involved in the import of iron(3+)-complexed aerobactin, a citrate-hydroxamate siderophore produced by other bacteria. Binds the iron(3+)-aerobactin complex and transfers it to the membrane-bound permease. Functions in the import of iron(3+)-complexed vulnibactin, a catecholate siderophore synthesized by V.vulnificus, in the absence of FatB. The polypeptide is Ferric aerobactin-binding protein VatD (Vibrio vulnificus).